The following is a 325-amino-acid chain: DNA-directed RNA polymerase subunit alpha (325 aa).

The segment at 1-238 (MSLKSLLKGF…EHLTVFINFE (238 aa)) is alpha N-terminal domain (alpha-NTD). The alpha C-terminal domain (alpha-CTD) stretch occupies residues 254 to 325 (KLKASLSKHV…LGLSFGMRDF (72 aa)).

This sequence belongs to the RNA polymerase alpha chain family. Homodimer. The RNAP catalytic core consists of 2 alpha, 1 beta, 1 beta' and 1 omega subunit. When a sigma factor is associated with the core the holoenzyme is formed, which can initiate transcription.

It carries out the reaction RNA(n) + a ribonucleoside 5'-triphosphate = RNA(n+1) + diphosphate. Functionally, DNA-dependent RNA polymerase catalyzes the transcription of DNA into RNA using the four ribonucleoside triphosphates as substrates. In Leptospira borgpetersenii serovar Hardjo-bovis (strain JB197), this protein is DNA-directed RNA polymerase subunit alpha.